The chain runs to 141 residues: Hemoglobin subunit alpha-D (141 aa).

The region spanning 1-141 (MLTEDEKQLI…VSAVLAEKYR (141 aa)) is the Globin domain. Positions 58 and 87 each coordinate heme b.

Belongs to the globin family. In terms of assembly, heterotetramer of two alpha-D chains and two beta chains. Red blood cells.

Its function is as follows. Involved in oxygen transport from the lung to the various peripheral tissues. In Chelonoidis carbonarius (Red-footed tortoise), this protein is Hemoglobin subunit alpha-D (HBAD).